We begin with the raw amino-acid sequence, 238 residues long: Purine nucleoside phosphorylase DeoD-type (238 aa).

His4 contacts a purine D-ribonucleoside. Phosphate-binding positions include Gly20, Arg24, Arg43, and 87–90 (RIGS). A purine D-ribonucleoside-binding positions include 181-183 (EME) and 205-206 (SD). The active-site Proton donor is the Asp206.

Belongs to the PNP/UDP phosphorylase family. As to quaternary structure, homohexamer; trimer of homodimers.

It carries out the reaction a purine D-ribonucleoside + phosphate = a purine nucleobase + alpha-D-ribose 1-phosphate. The enzyme catalyses a purine 2'-deoxy-D-ribonucleoside + phosphate = a purine nucleobase + 2-deoxy-alpha-D-ribose 1-phosphate. Functionally, catalyzes the reversible phosphorolytic breakdown of the N-glycosidic bond in the beta-(deoxy)ribonucleoside molecules, with the formation of the corresponding free purine bases and pentose-1-phosphate. This chain is Purine nucleoside phosphorylase DeoD-type, found in Mycoplasma genitalium (strain ATCC 33530 / DSM 19775 / NCTC 10195 / G37) (Mycoplasmoides genitalium).